Here is a 161-residue protein sequence, read N- to C-terminus: Ribonuclease P protein component 2 (161 aa).

This sequence belongs to the eukaryotic/archaeal RNase P protein component 2 family. In terms of assembly, consists of a catalytic RNA component and at least 4-5 protein subunits.

It is found in the cytoplasm. It carries out the reaction Endonucleolytic cleavage of RNA, removing 5'-extranucleotides from tRNA precursor.. Functionally, part of ribonuclease P, a protein complex that generates mature tRNA molecules by cleaving their 5'-ends. This Methanopyrus kandleri (strain AV19 / DSM 6324 / JCM 9639 / NBRC 100938) protein is Ribonuclease P protein component 2.